The chain runs to 64 residues: Large ribosomal subunit protein bL35 (64 aa).

A disordered region spans residues 19–41 (SGKVKRERMNGSHNLEHKNRKRT). Residues 25–35 (ERMNGSHNLEH) are compositionally biased toward basic and acidic residues.

It belongs to the bacterial ribosomal protein bL35 family.

The sequence is that of Large ribosomal subunit protein bL35 from Chlorobaculum tepidum (strain ATCC 49652 / DSM 12025 / NBRC 103806 / TLS) (Chlorobium tepidum).